Reading from the N-terminus, the 217-residue chain is MNQTLLSEFGSPLERVERALEALRAGKGVMVLDDENRENEGDMVFVAETMTTEQMAMSIRHGSGIVCVCITEERRQQLDLPMMVENNTSHFHTAFTVTIEAAQGVTTGVSAADRLTTVRAAAADNAKPSDLNRPGHVFPLRAQPGGVLTRGGHTEASIDLATLAGFKPVAVLCELTNDDGTMARAPEVVTFAKQHDMPVLTIEDLVAYRLREEKKAG.

Residues 37-38, Asp-42, 150-154, and Glu-174 each bind D-ribulose 5-phosphate; these read RE and RGGHT. Residue Glu-38 coordinates Mg(2+). His-153 contributes to the Mg(2+) binding site.

This sequence belongs to the DHBP synthase family. As to quaternary structure, homodimer. Mg(2+) serves as cofactor. Requires Mn(2+) as cofactor.

It catalyses the reaction D-ribulose 5-phosphate = (2S)-2-hydroxy-3-oxobutyl phosphate + formate + H(+). It participates in cofactor biosynthesis; riboflavin biosynthesis; 2-hydroxy-3-oxobutyl phosphate from D-ribulose 5-phosphate: step 1/1. Functionally, catalyzes the conversion of D-ribulose 5-phosphate to formate and 3,4-dihydroxy-2-butanone 4-phosphate. In Proteus mirabilis (strain HI4320), this protein is 3,4-dihydroxy-2-butanone 4-phosphate synthase.